The chain runs to 1382 residues: DNA-directed RNA polymerase subunit beta'' (1382 aa).

Residues C224, C294, C301, and C304 each coordinate Zn(2+).

This sequence belongs to the RNA polymerase beta' chain family. RpoC2 subfamily. As to quaternary structure, in plastids the minimal PEP RNA polymerase catalytic core is composed of four subunits: alpha, beta, beta', and beta''. When a (nuclear-encoded) sigma factor is associated with the core the holoenzyme is formed, which can initiate transcription. Zn(2+) serves as cofactor.

The protein resides in the plastid. The protein localises to the chloroplast. It catalyses the reaction RNA(n) + a ribonucleoside 5'-triphosphate = RNA(n+1) + diphosphate. DNA-dependent RNA polymerase catalyzes the transcription of DNA into RNA using the four ribonucleoside triphosphates as substrates. The sequence is that of DNA-directed RNA polymerase subunit beta'' from Dioscorea elephantipes (Elephant's foot yam).